The primary structure comprises 375 residues: Carbamoyl phosphate synthase small chain (375 aa).

The segment at 1–180 (MSKALLVLED…DAYVVEPKGK (180 aa)) is CPSase. Residues S46, G232, and G234 each contribute to the L-glutamine site. Positions 184-375 (TVAALDLGIK…SFVELMAAQR (192 aa)) constitute a Glutamine amidotransferase type-1 domain. Residue C260 is the Nucleophile of the active site. L-glutamine-binding residues include F261, Q264, N302, G304, and F305. Residues H350 and E352 contribute to the active site.

The protein belongs to the CarA family. Composed of two chains; the small (or glutamine) chain promotes the hydrolysis of glutamine to ammonia, which is used by the large (or ammonia) chain to synthesize carbamoyl phosphate. Tetramer of heterodimers (alpha,beta)4.

The enzyme catalyses hydrogencarbonate + L-glutamine + 2 ATP + H2O = carbamoyl phosphate + L-glutamate + 2 ADP + phosphate + 2 H(+). It carries out the reaction L-glutamine + H2O = L-glutamate + NH4(+). The protein operates within amino-acid biosynthesis; L-arginine biosynthesis; carbamoyl phosphate from bicarbonate: step 1/1. Its pathway is pyrimidine metabolism; UMP biosynthesis via de novo pathway; (S)-dihydroorotate from bicarbonate: step 1/3. Functionally, small subunit of the glutamine-dependent carbamoyl phosphate synthetase (CPSase). CPSase catalyzes the formation of carbamoyl phosphate from the ammonia moiety of glutamine, carbonate, and phosphate donated by ATP, constituting the first step of 2 biosynthetic pathways, one leading to arginine and/or urea and the other to pyrimidine nucleotides. The small subunit (glutamine amidotransferase) binds and cleaves glutamine to supply the large subunit with the substrate ammonia. The polypeptide is Carbamoyl phosphate synthase small chain (Mycobacterium leprae (strain TN)).